The sequence spans 187 residues: Ribonuclease HII (187 aa).

The 187-residue stretch at 1-187 (MIILGIDEAG…YKPVQVLLNE (187 aa)) folds into the RNase H type-2 domain. A divalent metal cation-binding residues include Asp7, Glu8, and Asp99.

Belongs to the RNase HII family. Mn(2+) is required as a cofactor. Mg(2+) serves as cofactor.

It is found in the cytoplasm. It catalyses the reaction Endonucleolytic cleavage to 5'-phosphomonoester.. Its function is as follows. Endonuclease that specifically degrades the RNA of RNA-DNA hybrids. The polypeptide is Ribonuclease HII (Francisella tularensis subsp. holarctica (strain FTNF002-00 / FTA)).